The sequence spans 650 residues: Acetyl-coenzyme A synthetase (650 aa).

Residues 191 to 194 (RGGR), T311, and N335 contribute to the CoA site. Residues 387 to 389 (GEP), 411 to 416 (DTWWQT), D500, and R515 each bind ATP. A CoA-binding site is contributed by S523. R526 serves as a coordination point for ATP. Residues V537, H539, and V542 each coordinate Mg(2+). R584 serves as a coordination point for CoA. At K609 the chain carries N6-acetyllysine.

The protein belongs to the ATP-dependent AMP-binding enzyme family. Requires Mg(2+) as cofactor. Post-translationally, acetylated. Deacetylation by the SIR2-homolog deacetylase activates the enzyme.

It catalyses the reaction acetate + ATP + CoA = acetyl-CoA + AMP + diphosphate. Functionally, catalyzes the conversion of acetate into acetyl-CoA (AcCoA), an essential intermediate at the junction of anabolic and catabolic pathways. AcsA undergoes a two-step reaction. In the first half reaction, AcsA combines acetate with ATP to form acetyl-adenylate (AcAMP) intermediate. In the second half reaction, it can then transfer the acetyl group from AcAMP to the sulfhydryl group of CoA, forming the product AcCoA. The protein is Acetyl-coenzyme A synthetase of Shewanella frigidimarina (strain NCIMB 400).